The sequence spans 122 residues: Large ribosomal subunit protein uL14 (122 aa).

The protein belongs to the universal ribosomal protein uL14 family. Part of the 50S ribosomal subunit. Forms a cluster with proteins L3 and L19. In the 70S ribosome, L14 and L19 interact and together make contacts with the 16S rRNA in bridges B5 and B8.

In terms of biological role, binds to 23S rRNA. Forms part of two intersubunit bridges in the 70S ribosome. The protein is Large ribosomal subunit protein uL14 of Trichodesmium erythraeum (strain IMS101).